Consider the following 337-residue polypeptide: tRNA N6-adenosine threonylcarbamoyltransferase (337 aa).

H111 and H115 together coordinate Fe cation. Residues 134-138, D167, G180, and N272 contribute to the substrate site; that span reads LVSGG. D300 contacts Fe cation.

The protein belongs to the KAE1 / TsaD family. The cofactor is Fe(2+).

It is found in the cytoplasm. The enzyme catalyses L-threonylcarbamoyladenylate + adenosine(37) in tRNA = N(6)-L-threonylcarbamoyladenosine(37) in tRNA + AMP + H(+). In terms of biological role, required for the formation of a threonylcarbamoyl group on adenosine at position 37 (t(6)A37) in tRNAs that read codons beginning with adenine. Is involved in the transfer of the threonylcarbamoyl moiety of threonylcarbamoyl-AMP (TC-AMP) to the N6 group of A37, together with TsaE and TsaB. TsaD likely plays a direct catalytic role in this reaction. This Shewanella sediminis (strain HAW-EB3) protein is tRNA N6-adenosine threonylcarbamoyltransferase.